Consider the following 773-residue polypeptide: Circadian clock protein PASD1 (773 aa).

The 73-residue stretch at 30-102 (YDYFNQVTLQ…IILKFPLLNS (73 aa)) folds into the PAS domain. The tract at residues 313–361 (SVDQEGPMDQQDPENPVAPLDQAGLMDPVDPEDSVDLGAAGASAQPLQP) is disordered. Positions 365–412 (VAYDIISQELELMKKLKEQLEERTWLLHDAIQNQQNALELMMDHLQKQ) are necessary for transcriptional repression. The stretch at 365 to 412 (VAYDIISQELELMKKLKEQLEERTWLLHDAIQNQQNALELMMDHLQKQ) forms a coiled coil. 3 disordered regions span residues 427-448 (SEAV…PLPH), 506-569 (QRKV…QLQE), and 732-773 (GVEG…NKPC). Residues 475 to 553 (VAFNQQQLVQ…QERKKWQGQM (79 aa)) are a coiled coil. Residues 506–536 (QRKVQKQKKMQEKKKLQEQKMQEKKKLQEQR) show a composition bias toward basic and acidic residues.

Interacts with the CLOCK-BMAL1 heterodimer; this interaction inhibits CLOCK-BMAL1 transcriptional activation and suppress circadian timekeeping. Interacts with BMAL1. Testis-specific. Expressed in a broad range of cancer cells, including melanoma, lung cancer, and breast cancer (at protein level). Testis-specific. Found in histologically normal tissues from patients with uterus, lung and small intestine cancers. Widespread expression seen in solid tumors and diffuse large B-cell lymphoma (DLBCL)-derived cell lines. Isoform 2 is expressed in all DLBCL-derived cell lines, while isoform 1 is preferentially expressed in cell lines derived from non-germinal center DLBCL.

It is found in the nucleus. Its function is as follows. Functions as a suppressor of the biological clock that drives the daily circadian rhythms of cells throughout the body. Acts as a nuclear repressor of the CLOCK-BMAL1 heterodimer-mediated transcriptional activation of the core clock components. Inhibits circadian clock function in cancer cells, when overexpressed. This is Circadian clock protein PASD1 from Homo sapiens (Human).